Reading from the N-terminus, the 604-residue chain is Choline transporter-like protein 3 (604 aa).

N-linked (GlcNAc...) asparagine glycans are attached at residues Asn90 and Asn103. Transmembrane regions (helical) follow at residues 165–185 (DTIL…LFTF), 195–215 (IIIS…WWLY), 237–257 (LAFA…IFTL), 286–306 (LWTF…LLSL), and 330–350 (YLWW…LTCQ). 2 N-linked (GlcNAc...) asparagine glycosylation sites follow: Asn454 and Asn472. The next 2 membrane-spanning stretches (helical) occupy residues 485–505 (FIIF…GLMA) and 514–534 (VWAI…HSFL). The span at 581–592 (NARSQGHKNSLP) shows a compositional bias: polar residues. The disordered stretch occupies residues 581–604 (NARSQGHKNSLPNEEGTELRPIVR).

This sequence belongs to the CTL (choline transporter-like) family. Expressed in colon, kidney and ileum.

The protein localises to the membrane. In Rattus norvegicus (Rat), this protein is Choline transporter-like protein 3 (Slc44a3).